Reading from the N-terminus, the 227-residue chain is Cytochrome c oxidase subunit 2 (227 aa).

Over 1 to 14 (MAYPFQLGLQDATS) the chain is Mitochondrial intermembrane. The helical transmembrane segment at 15-45 (PIMEELLHFHDHTLMIVFLISSLVLYIISLM) threads the bilayer. Residues 46–59 (LTTKLTHTSTMDAQ) lie on the Mitochondrial matrix side of the membrane. The chain crosses the membrane as a helical span at residues 60-87 (EVETVWTILPAIILVLIALPSLRILYMM). Residues 88–227 (DEINNPSLTV…YFETWSALMV (140 aa)) are Mitochondrial intermembrane-facing. Cu cation-binding residues include histidine 161, cysteine 196, glutamate 198, cysteine 200, histidine 204, and methionine 207. Glutamate 198 contacts Mg(2+). Tyrosine 218 is modified (phosphotyrosine).

The protein belongs to the cytochrome c oxidase subunit 2 family. Component of the cytochrome c oxidase (complex IV, CIV), a multisubunit enzyme composed of 14 subunits. The complex is composed of a catalytic core of 3 subunits MT-CO1, MT-CO2 and MT-CO3, encoded in the mitochondrial DNA, and 11 supernumerary subunits COX4I, COX5A, COX5B, COX6A, COX6B, COX6C, COX7A, COX7B, COX7C, COX8 and NDUFA4, which are encoded in the nuclear genome. The complex exists as a monomer or a dimer and forms supercomplexes (SCs) in the inner mitochondrial membrane with NADH-ubiquinone oxidoreductase (complex I, CI) and ubiquinol-cytochrome c oxidoreductase (cytochrome b-c1 complex, complex III, CIII), resulting in different assemblies (supercomplex SCI(1)III(2)IV(1) and megacomplex MCI(2)III(2)IV(2)). Found in a complex with TMEM177, COA6, COX18, COX20, SCO1 and SCO2. Interacts with TMEM177 in a COX20-dependent manner. Interacts with COX20. Interacts with COX16. Requires Cu cation as cofactor.

It is found in the mitochondrion inner membrane. It catalyses the reaction 4 Fe(II)-[cytochrome c] + O2 + 8 H(+)(in) = 4 Fe(III)-[cytochrome c] + 2 H2O + 4 H(+)(out). In terms of biological role, component of the cytochrome c oxidase, the last enzyme in the mitochondrial electron transport chain which drives oxidative phosphorylation. The respiratory chain contains 3 multisubunit complexes succinate dehydrogenase (complex II, CII), ubiquinol-cytochrome c oxidoreductase (cytochrome b-c1 complex, complex III, CIII) and cytochrome c oxidase (complex IV, CIV), that cooperate to transfer electrons derived from NADH and succinate to molecular oxygen, creating an electrochemical gradient over the inner membrane that drives transmembrane transport and the ATP synthase. Cytochrome c oxidase is the component of the respiratory chain that catalyzes the reduction of oxygen to water. Electrons originating from reduced cytochrome c in the intermembrane space (IMS) are transferred via the dinuclear copper A center (CU(A)) of subunit 2 and heme A of subunit 1 to the active site in subunit 1, a binuclear center (BNC) formed by heme A3 and copper B (CU(B)). The BNC reduces molecular oxygen to 2 water molecules using 4 electrons from cytochrome c in the IMS and 4 protons from the mitochondrial matrix. The protein is Cytochrome c oxidase subunit 2 (MT-CO2) of Cerdocyon thous (Crab-eating fox).